The sequence spans 353 residues: uncharacterized protein (353 aa).

A signal peptide spans 1 to 23; that stretch reads MSAGKGLLLVICLLFLPLKSAMA.

The protein to E.coli YqiI.

Functionally, may be involved in a fimbrial system chaperoned by YbgP and exported by YbgQ. This is an uncharacterized protein from Escherichia coli (strain K12).